The primary structure comprises 237 residues: Large ribosomal subunit protein uL1 (237 aa).

This sequence belongs to the universal ribosomal protein uL1 family. In terms of assembly, part of the 50S ribosomal subunit.

Functionally, binds directly to 23S rRNA. The L1 stalk is quite mobile in the ribosome, and is involved in E site tRNA release. Protein L1 is also a translational repressor protein, it controls the translation of the L11 operon by binding to its mRNA. This chain is Large ribosomal subunit protein uL1, found in Chloroflexus aggregans (strain MD-66 / DSM 9485).